Consider the following 73-residue polypeptide: Large ribosomal subunit protein uL24 (73 aa).

A compositionally biased stretch (basic and acidic residues) spans 51–65 (DDNPKGGFIHKEKPM). A disordered region spans residues 51-73 (DDNPKGGFIHKEKPMHISNVKKA).

It belongs to the universal ribosomal protein uL24 family. In terms of assembly, part of the 50S ribosomal subunit.

One of two assembly initiator proteins, it binds directly to the 5'-end of the 23S rRNA, where it nucleates assembly of the 50S subunit. Functionally, one of the proteins that surrounds the polypeptide exit tunnel on the outside of the subunit. In Helicobacter acinonychis (strain Sheeba), this protein is Large ribosomal subunit protein uL24.